A 412-amino-acid chain; its full sequence is Gamma-glutamyl phosphate reductase (412 aa).

Belongs to the gamma-glutamyl phosphate reductase family.

It localises to the cytoplasm. It carries out the reaction L-glutamate 5-semialdehyde + phosphate + NADP(+) = L-glutamyl 5-phosphate + NADPH + H(+). Its pathway is amino-acid biosynthesis; L-proline biosynthesis; L-glutamate 5-semialdehyde from L-glutamate: step 2/2. Functionally, catalyzes the NADPH-dependent reduction of L-glutamate 5-phosphate into L-glutamate 5-semialdehyde and phosphate. The product spontaneously undergoes cyclization to form 1-pyrroline-5-carboxylate. This chain is Gamma-glutamyl phosphate reductase, found in Aliarcobacter butzleri (strain RM4018) (Arcobacter butzleri).